The primary structure comprises 598 residues: Replication protein E1 (598 aa).

Positions 76–78 (KRK) match the Nuclear localization signal motif. Residues Ser-82 and Ser-91 each carry the phosphoserine; by host modification. The Nuclear export signal signature appears at 90–99 (LSPQLQAVKI). Positions 138-302 (SQDGGGDINL…LVSHQAATTA (165 aa)) are DNA-binding region. An SF3 helicase domain is found at 401–551 (VNILSFLIVL…MPFLDDGSPM (151 aa)). 427-434 (GPPDTGKS) lines the ATP pocket. Lys-508 participates in a covalent cross-link: Glycyl lysine isopeptide (Lys-Gly) (interchain with G-Cter in SUMO). The segment at 573-598 (TDPEEESNGVPSRAFRCTSRSNSDSY) is disordered.

The protein belongs to the papillomaviridae E1 protein family. In terms of assembly, can form hexamers. Interacts with E2 protein; this interaction increases E1 DNA binding specificity. Interacts with host DNA polymerase subunit POLA2. Interacts with host single stranded DNA-binding protein RPA1. Interacts with host TOP1; this interaction stimulates the enzymatic activity of TOP1. Post-translationally, phosphorylated. In terms of processing, sumoylated.

It localises to the host nucleus. The catalysed reaction is Couples ATP hydrolysis with the unwinding of duplex DNA by translocating in the 3'-5' direction.. It catalyses the reaction ATP + H2O = ADP + phosphate + H(+). ATP-dependent DNA 3'-5' helicase required for initiation of viral DNA replication. It forms a complex with the viral E2 protein. The E1-E2 complex binds to the replication origin which contains binding sites for both proteins. During the initial step, a dimer of E1 interacts with a dimer of protein E2 leading to a complex that binds the viral origin of replication with high specificity. Then, a second dimer of E1 displaces the E2 dimer in an ATP-dependent manner to form the E1 tetramer. Following this, two E1 monomers are added to each half of the site, which results in the formation of two E1 trimers on the viral ori. Subsequently, two hexamers will be created. The double hexamer acts as a bi-directional helicase machinery and unwinds the viral DNA and then recruits the host DNA polymerase to start replication. The chain is Replication protein E1 from Human papillomavirus 65.